Reading from the N-terminus, the 203-residue chain is Thymidylate kinase (203 aa).

14–21 contacts ATP; sequence GGEGIGKS.

The protein belongs to the thymidylate kinase family.

The enzyme catalyses dTMP + ATP = dTDP + ADP. Its function is as follows. Phosphorylation of dTMP to form dTDP in both de novo and salvage pathways of dTTP synthesis. In Rickettsia rickettsii (strain Iowa), this protein is Thymidylate kinase.